Here is a 37-residue protein sequence, read N- to C-terminus: Cytochrome b6-f complex subunit 5 (37 aa).

The helical transmembrane segment at 5-25 threads the bilayer; that stretch reads LLFGIVLGLIPVTLTGLFVAA.

It belongs to the PetG family. As to quaternary structure, the 4 large subunits of the cytochrome b6-f complex are cytochrome b6, subunit IV (17 kDa polypeptide, PetD), cytochrome f and the Rieske protein, while the 4 small subunits are PetG, PetL, PetM and PetN. The complex functions as a dimer.

The protein localises to the plastid. It is found in the chloroplast thylakoid membrane. Functionally, component of the cytochrome b6-f complex, which mediates electron transfer between photosystem II (PSII) and photosystem I (PSI), cyclic electron flow around PSI, and state transitions. PetG is required for either the stability or assembly of the cytochrome b6-f complex. The chain is Cytochrome b6-f complex subunit 5 from Guillardia theta (Cryptophyte).